Consider the following 581-residue polypeptide: Arginine--tRNA ligase (581 aa).

The short motif at 126-136 is the 'HIGH' region element; sequence PNLAKEMHVGH.

The protein belongs to the class-I aminoacyl-tRNA synthetase family. In terms of assembly, monomer.

The protein resides in the cytoplasm. It catalyses the reaction tRNA(Arg) + L-arginine + ATP = L-arginyl-tRNA(Arg) + AMP + diphosphate. The protein is Arginine--tRNA ligase of Shewanella baltica (strain OS155 / ATCC BAA-1091).